A 142-amino-acid chain; its full sequence is MAKKIEAYIKLQVKSGSANPSPPVGPALGQKGVNIMEFCKAFNARTEKMEKGMPIPVVITVYSDRSFTFETKTPPASFLLKQAAGLKSGSSRPNTQKVGTIKRAKVQEIAELKAADMTGADVEAMTRSIEGTARSMGLVVED.

Belongs to the universal ribosomal protein uL11 family. In terms of assembly, part of the ribosomal stalk of the 50S ribosomal subunit. Interacts with L10 and the large rRNA to form the base of the stalk. L10 forms an elongated spine to which L12 dimers bind in a sequential fashion forming a multimeric L10(L12)X complex. In terms of processing, one or more lysine residues are methylated.

In terms of biological role, forms part of the ribosomal stalk which helps the ribosome interact with GTP-bound translation factors. The chain is Large ribosomal subunit protein uL11 from Shewanella amazonensis (strain ATCC BAA-1098 / SB2B).